The primary structure comprises 318 residues: Ribose-phosphate pyrophosphokinase 2 (318 aa).

The Mg(2+) site is built by Asp-132, His-134, His-143, and Asp-147.

Belongs to the ribose-phosphate pyrophosphokinase family.

The protein resides in the cytoplasm. It carries out the reaction D-ribose 5-phosphate + ATP = 5-phospho-alpha-D-ribose 1-diphosphate + AMP + H(+). Its pathway is metabolic intermediate biosynthesis; 5-phospho-alpha-D-ribose 1-diphosphate biosynthesis; 5-phospho-alpha-D-ribose 1-diphosphate from D-ribose 5-phosphate (route I): step 1/1. Functionally, 5-phosphoribose 1-diphosphate synthase involved in nucleotide, histidine, and tryptophan biosynthesis. Active in heteromultimeric complexes with other 5-phosphoribose 1-diphosphate synthases (PRS2, PRS3, PRS4 and PRS5). The polypeptide is Ribose-phosphate pyrophosphokinase 2 (PRS2) (Saccharomyces cerevisiae (strain ATCC 204508 / S288c) (Baker's yeast)).